The chain runs to 199 residues: Dephospho-CoA kinase (199 aa).

The region spanning 3–199 is the DPCK domain; that stretch reads KVGLTGGICS…DLLEFFTLYQ (197 aa). 11 to 16 contributes to the ATP binding site; sequence CSGKST.

This sequence belongs to the CoaE family.

Its subcellular location is the cytoplasm. It carries out the reaction 3'-dephospho-CoA + ATP = ADP + CoA + H(+). Its pathway is cofactor biosynthesis; coenzyme A biosynthesis; CoA from (R)-pantothenate: step 5/5. In terms of biological role, catalyzes the phosphorylation of the 3'-hydroxyl group of dephosphocoenzyme A to form coenzyme A. The protein is Dephospho-CoA kinase of Clostridium perfringens (strain 13 / Type A).